The sequence spans 194 residues: MRHGKKFNHLSRPASHRKALLSNQAKSLILHKRIITTVAKAKALRKFVEPIITKAKQDSTHARRVVFSYFQDKEPVKLLFNEVAPKIGDRPGGYTRIIRLGNRLGDNAEMCMMELVDYNTYLQKAAEPKQTKARTRRGKGKLGATTTVSSEKTQPNTQDMATQAKPVENTQVEGADEQEALDTQSPEQTNKQEE.

The tract at residues alanine 126–glutamate 194 is disordered. Over residues threonine 131–glycine 140 the composition is skewed to basic residues. Polar residues-rich tracts occupy residues alanine 144 to alanine 161 and leucine 181 to glutamate 194.

This sequence belongs to the bacterial ribosomal protein bL17 family. In terms of assembly, part of the 50S ribosomal subunit. Contacts protein L32.

The sequence is that of Large ribosomal subunit protein bL17 from Amoebophilus asiaticus (strain 5a2).